A 394-amino-acid chain; its full sequence is Ceramide glucosyltransferase (394 aa).

Topologically, residues 1 to 10 are lumenal; that stretch reads MAVLDLALQG. A helical transmembrane segment spans residues 11–32; that stretch reads LAIFGCVLFFVLWFMHFLSIVY. At 33-195 the chain is on the cytoplasmic side; it reads TRLHLNKKVS…QVYFGTSHPR (163 aa). Asp-92 is a short sequence motif (D1). A short sequence motif (D2) is located at residue Asp-144. Residues 196-215 traverse the membrane as a helical segment; it reads SYISANVTGFKCVTGMSCLM. The Lumenal portion of the chain corresponds to 216-287; it reads RKEVLDQAGG…KLRINMLPAT (72 aa). Asp-236 is a short sequence motif (D3). The Proton acceptor role is filled by Asp-236. A (Q/R)XXRW motif is present at residues 272–276; the sequence is RMIRW. The helical transmembrane segment at 288 to 304 threads the bilayer; the sequence is IICEPISECFVASLIIG. At 305–309 the chain is on the cytoplasmic side; sequence WAAHH. The chain crosses the membrane as a helical span at residues 310-328; sequence IFRWDIMVFFMCHCLAWFI. Residues 329-348 are Lumenal-facing; that stretch reads FDYIQLRGVQGGPLNFSKLD. A helical transmembrane segment spans residues 349–369; the sequence is YAVAWFIRESMTIYIFLSALW. At 370–394 the chain is on the cytoplasmic side; the sequence is DPTISWRTGRYRLRCGGTAEEILDV.

It belongs to the glycosyltransferase 2 family.

The protein resides in the golgi apparatus membrane. It catalyses the reaction an N-acylsphing-4-enine + UDP-alpha-D-glucose = a beta-D-glucosyl-(1&lt;-&gt;1')-N-acylsphing-4-enine + UDP + H(+). The catalysed reaction is UDP-alpha-D-xylose + an N-acylsphing-4-enine = a beta-D-xylosyl-(1&lt;-&gt;1')-N-acylsphing-4-enine + UDP + H(+). It carries out the reaction N-(9Z-octadecenoyl)-sphing-4-enine + UDP-alpha-D-xylose = beta-D-xylosyl-(1&lt;-&gt;1')-N-(9Z-octadecenoyl)-sphing-4-enine + UDP + H(+). Its pathway is lipid metabolism; sphingolipid metabolism. In terms of biological role, participates in the initial step of the glucosylceramide-based glycosphingolipid/GSL synthetic pathway at the cytosolic surface of the Golgi. Catalyzes the transfer of glucose from UDP-glucose to ceramide to produce glucosylceramide/GlcCer (such as beta-D-glucosyl-(1&lt;-&gt;1')-N-acylsphing-4-enine). Glucosylceramide is the core component of glycosphingolipids/GSLs, amphipathic molecules consisting of a ceramide lipid moiety embedded in the outer leaflet of the membrane, linked to one of hundreds of different externally oriented oligosaccharide structures. Glycosphingolipids are essential components of membrane microdomains that mediate membrane trafficking and signal transduction. They are implicated in many fundamental cellular processes, including growth, differentiation, migration, morphogenesis, cell-to-cell and cell-to-matrix interactions. Catalyzes the synthesis of xylosylceramide/XylCer (such as beta-D-xylosyl-(1&lt;-&gt;1')-N-acylsphing-4-enine) using UDP-Xyl as xylose donor. In Xenopus tropicalis (Western clawed frog), this protein is Ceramide glucosyltransferase (ugcg).